The following is a 75-amino-acid chain: DNA-directed RNA polymerase subunit omega (75 aa).

This sequence belongs to the RNA polymerase subunit omega family. As to quaternary structure, in cyanobacteria the RNAP catalytic core is composed of 2 alpha, 1 beta, 1 beta', 1 gamma and 1 omega subunit. When a sigma factor is associated with the core the holoenzyme is formed, which can initiate transcription.

The enzyme catalyses RNA(n) + a ribonucleoside 5'-triphosphate = RNA(n+1) + diphosphate. In terms of biological role, promotes RNA polymerase assembly. Latches the N- and C-terminal regions of the beta' subunit thereby facilitating its interaction with the beta and alpha subunits. The chain is DNA-directed RNA polymerase subunit omega from Synechococcus sp. (strain CC9605).